Reading from the N-terminus, the 278-residue chain is Thiazole synthase (278 aa).

Lysine 107 (schiff-base intermediate with DXP) is an active-site residue. 1-deoxy-D-xylulose 5-phosphate contacts are provided by residues glycine 168, 194–195, and 216–217; these read AG and AS.

Belongs to the ThiG family. In terms of assembly, homotetramer. Forms heterodimers with either ThiH or ThiS.

The protein resides in the cytoplasm. It catalyses the reaction [ThiS sulfur-carrier protein]-C-terminal-Gly-aminoethanethioate + 2-iminoacetate + 1-deoxy-D-xylulose 5-phosphate = [ThiS sulfur-carrier protein]-C-terminal Gly-Gly + 2-[(2R,5Z)-2-carboxy-4-methylthiazol-5(2H)-ylidene]ethyl phosphate + 2 H2O + H(+). It functions in the pathway cofactor biosynthesis; thiamine diphosphate biosynthesis. In terms of biological role, catalyzes the rearrangement of 1-deoxy-D-xylulose 5-phosphate (DXP) to produce the thiazole phosphate moiety of thiamine. Sulfur is provided by the thiocarboxylate moiety of the carrier protein ThiS. In vitro, sulfur can be provided by H(2)S. This is Thiazole synthase from Corynebacterium urealyticum (strain ATCC 43042 / DSM 7109).